Here is a 244-residue protein sequence, read N- to C-terminus: DNA repair protein RecO (244 aa).

Belongs to the RecO family.

Its function is as follows. Involved in DNA repair and RecF pathway recombination. The polypeptide is DNA repair protein RecO (Caldicellulosiruptor bescii (strain ATCC BAA-1888 / DSM 6725 / KCTC 15123 / Z-1320) (Anaerocellum thermophilum)).